Reading from the N-terminus, the 367-residue chain is ELAV-like protein 3 (367 aa).

RRM domains follow at residues 39–117, 125–205, and 284–362; these read TNLI…YARP, ANLY…FANN, and WCIF…FKTS.

This sequence belongs to the RRM elav family. Interacts with MAP1B light chain LC1. Brain specific.

Functionally, RNA-binding protein that binds to AU-rich element (ARE) sequences of target mRNAs, including VEGF mRNA. May also bind poly-A tracts via RRM 3. May be involved in neuronal differentiation and maintenance. Plays a role in the stabilization of GAP43 mRNA and in spatial learning. The polypeptide is ELAV-like protein 3 (ELAVL3) (Homo sapiens (Human)).